Here is a 490-residue protein sequence, read N- to C-terminus: Cis-aconitate decarboxylase (490 aa).

This sequence belongs to the PrpD family.

The protein localises to the mitochondrion. It catalyses the reaction cis-aconitate + H(+) = itaconate + CO2. Its function is as follows. Involved in the production of itaconic acid, a soluble unsaturated dicarboxylic acid mainly produced from sugars. The polypeptide is Cis-aconitate decarboxylase (cad1) (Aspergillus terreus).